Here is a 358-residue protein sequence, read N- to C-terminus: MSATRSMEPDLRGRKVLLHDMCLRDGMHAKREQIPVEQMVKVAMALDAAGVPLIQVTHGAGLGGNSLQHGFALASNEAYLSAVAPKMKQAKVSVLLIPGLGTMRELQSAYNCGARSVTVATHCTEADTAPQHIAYARKLGMDTVGFLMMAHLNDPEGLAKQGKLMEDYGAQTVYVTDSAGYMLPADVRARVAALRAVLKPETEIGFHGHHNLGMGIANSIAAIEEGASRIDGSVAGLGAGAGNTPLEVFLAVCDRMGIETGVDLFKLMDVAEDVIVPMMDHLVRVDRESLTLGFAGVYSTFLLHAKRAAARFGVPAREILVELGRRKMIGGQEDMIEDTAMSMAKERGLLKDVSRKAA.

The Pyruvate carboxyltransferase domain occupies 16 to 268; sequence VLLHDMCLRD…ETGVDLFKLM (253 aa). 24–25 is a substrate binding site; sequence RD. Asp-25 is a binding site for Mn(2+). The Proton acceptor role is filled by His-28. 2 residues coordinate substrate: Ser-178 and His-207. The Mn(2+) site is built by His-207 and His-209. Residue Tyr-298 participates in substrate binding.

This sequence belongs to the 4-hydroxy-2-oxovalerate aldolase family.

The enzyme catalyses (S)-4-hydroxy-2-oxopentanoate = acetaldehyde + pyruvate. The sequence is that of 4-hydroxy-2-oxovalerate aldolase 2 from Methylibium petroleiphilum (strain ATCC BAA-1232 / LMG 22953 / PM1).